Consider the following 395-residue polypeptide: Probable peptidoglycan glycosyltransferase FtsW (395 aa).

The Cytoplasmic portion of the chain corresponds to 1-24; it reads MADLAAGVAERGPRLSLWSSLDQR. Residues 25–45 form a helical membrane-spanning segment; that stretch reads LVWVVAATALLGLVMVASASI. The Periplasmic portion of the chain corresponds to 46 to 62; it reads SMAEQATGDPFYFFKRQ. The chain crosses the membrane as a helical span at residues 63-83; the sequence is IFFALLGLGMALALLQIPLAT. At 84–86 the chain is on the cytoplasmic side; sequence WER. Residues 87-107 form a helical membrane-spanning segment; sequence AGPGLLLGALALLVLVLIPGV. Residues 108–116 are Periplasmic-facing; that stretch reads GREVNGAVR. Residues 117–137 form a helical membrane-spanning segment; the sequence is WIPLGVFNLQVAEVVKVLLAL. Over 138-152 the chain is Cytoplasmic; it reads YLAGFLVRRQQQLRT. A helical membrane pass occupies residues 153–173; sequence SMAAFLVPVLVSAACAFLLLL. The Periplasmic segment spans residues 174–178; sequence QPDFG. Residues 179-199 form a helical membrane-spanning segment; it reads TALMLMALAVGLLYLAGAPLW. Arg-200 is a topological domain (cytoplasmic). A helical membrane pass occupies residues 201–221; it reads FAALVGVLAAAAAALVVYSPY. Topologically, residues 222 to 276 are periplasmic; sequence RWQRVTAFMDPWSDPFNTGFQLTQSLIAIGRGDWLGVGLGGSVQKLFYLPEAHTD. Residues 277 to 297 form a helical membrane-spanning segment; the sequence is FVFSVLAEELGWLGVLAVVLL. Residues 298–316 lie on the Cytoplasmic side of the membrane; sequence FSYIVWRAMAVGWQCHRHR. Residues 317 to 337 form a helical membrane-spanning segment; sequence LPFAGYLAWAVGLALGLQAFI. Over 338–352 the chain is Periplasmic; the sequence is NMGVATGLLPTKGLT. A helical transmembrane segment spans residues 353-373; sequence LPLFSYGGSSALATGAMVGLL. Residues 374 to 395 lie on the Cytoplasmic side of the membrane; the sequence is LRCGYELAQARAEGRRPEEAAS.

This sequence belongs to the SEDS family. FtsW subfamily.

It is found in the cell inner membrane. It carries out the reaction [GlcNAc-(1-&gt;4)-Mur2Ac(oyl-L-Ala-gamma-D-Glu-L-Lys-D-Ala-D-Ala)](n)-di-trans,octa-cis-undecaprenyl diphosphate + beta-D-GlcNAc-(1-&gt;4)-Mur2Ac(oyl-L-Ala-gamma-D-Glu-L-Lys-D-Ala-D-Ala)-di-trans,octa-cis-undecaprenyl diphosphate = [GlcNAc-(1-&gt;4)-Mur2Ac(oyl-L-Ala-gamma-D-Glu-L-Lys-D-Ala-D-Ala)](n+1)-di-trans,octa-cis-undecaprenyl diphosphate + di-trans,octa-cis-undecaprenyl diphosphate + H(+). It participates in cell wall biogenesis; peptidoglycan biosynthesis. Peptidoglycan polymerase that is essential for cell division. The protein is Probable peptidoglycan glycosyltransferase FtsW of Halorhodospira halophila (strain DSM 244 / SL1) (Ectothiorhodospira halophila (strain DSM 244 / SL1)).